Consider the following 282-residue polypeptide: Deoxyribonuclease-1 (282 aa).

A signal peptide spans 1 to 20 (MARLVLELLAAALLLRVAAT). A glycan (N-linked (GlcNAc...) asparagine) is linked at Asn-38. Residue Glu-98 is part of the active site. Cysteines 121 and 124 form a disulfide. The active site involves His-154. The cysteines at positions 193 and 229 are disulfide-linked.

It belongs to the DNase I family. The cofactor is Ca(2+). Requires Mg(2+) as cofactor. In terms of processing, N-glycosylated.

The protein localises to the secreted. Its subcellular location is the zymogen granule. It localises to the nucleus envelope. The catalysed reaction is Endonucleolytic cleavage to 5'-phosphodinucleotide and 5'-phosphooligonucleotide end-products.. In terms of biological role, serum endocuclease secreted into body fluids by a wide variety of exocrine and endocrine organs. Expressed by non-hematopoietic tissues and preferentially cleaves protein-free DNA. Among other functions, seems to be involved in cell death by apoptosis. Binds specifically to G-actin and blocks actin polymerization. The protein is Deoxyribonuclease-1 (DNASE1) of Gallus gallus (Chicken).